We begin with the raw amino-acid sequence, 1249 residues long: Myosin-1 (1249 aa).

The disordered stretch occupies residues 1 to 40 (MGHSRRPAGGEKKSRFGRSKAAADVGDGRQAGGKPQVRKA). In terms of domain architecture, Myosin motor spans 50 to 729 (IGVSDLTLLS…TLFALEAMRD (680 aa)). 143–150 (GESGAGKT) lines the ATP pocket. Serine 371 is modified (phosphoserine). The actin-binding stretch occupies residues 418 to 500 (SIGILDIYGF…PGVFAALNDA (83 aa)). IQ domains lie at 733-753 (HNMA…RTEC) and 754-779 (AIRI…QGHT). The region spanning 787-979 (RRRMSILGSR…PGEPPNSVSK (193 aa)) is the TH1 domain. Disordered regions lie at residues 959-1081 (DSYK…KAKA) and 1127-1249 (EAYL…DDDW). Low complexity-rich tracts occupy residues 1026-1035 (PQTAAAQPTP) and 1043-1061 (PVAA…ASAR). A compositionally biased stretch (pro residues) spans 1062-1073 (APPPPPPAPPAA). An SH3 domain is found at 1074-1135 (AGPKKAKALY…PEAYLEEQVA (62 aa)). Over residues 1137 to 1149 (TPKPAPPPPPPVA) the composition is skewed to pro residues. The span at 1150 to 1170 (PRASPAPVNGSAAVAAAKAKA) shows a compositional bias: low complexity. Residues 1199–1221 (VSMNSQGDSSGASGRGTPSSVSN) are compositionally biased toward polar residues. Positions 1222–1235 (ASLAGGLAEALRAR) are enriched in low complexity.

It belongs to the TRAFAC class myosin-kinesin ATPase superfamily. Myosin family. In terms of assembly, interacts (via IQ domains) with camA. In terms of processing, phosphorylation of the TEDS site (Ser-371) is required for the polarization of the actin cytoskeleton. Phosphorylation probably activates the myosin-I ATPase activity.

The protein localises to the cytoplasm. Its subcellular location is the cytoskeleton. The protein resides in the actin patch. Type-I myosin implicated in the organization of the actin cytoskeleton. Required for proper actin cytoskeleton polarization. At the cell cortex, assembles in patch-like structures together with proteins from the actin-polymerizing machinery and promotes actin assembly. Functions as actin nucleation-promoting factor (NPF) for the Arp2/3 complex. Plays an important role in polarized growth, spore germination, hyphal morphogenesis, and septal wall formation. In Emericella nidulans (strain FGSC A4 / ATCC 38163 / CBS 112.46 / NRRL 194 / M139) (Aspergillus nidulans), this protein is Myosin-1 (myoA).